Consider the following 418-residue polypeptide: NADH-quinone oxidoreductase subunit D (418 aa).

The protein belongs to the complex I 49 kDa subunit family. As to quaternary structure, NDH-1 is composed of 14 different subunits. Subunits NuoB, C, D, E, F, and G constitute the peripheral sector of the complex.

Its subcellular location is the cell inner membrane. It carries out the reaction a quinone + NADH + 5 H(+)(in) = a quinol + NAD(+) + 4 H(+)(out). In terms of biological role, NDH-1 shuttles electrons from NADH, via FMN and iron-sulfur (Fe-S) centers, to quinones in the respiratory chain. The immediate electron acceptor for the enzyme in this species is believed to be ubiquinone. Couples the redox reaction to proton translocation (for every two electrons transferred, four hydrogen ions are translocated across the cytoplasmic membrane), and thus conserves the redox energy in a proton gradient. The chain is NADH-quinone oxidoreductase subunit D from Bordetella avium (strain 197N).